The following is a 184-amino-acid chain: Endoribonuclease YbeY (184 aa).

3 residues coordinate Zn(2+): His-151, His-155, and His-161.

It belongs to the endoribonuclease YbeY family. Zn(2+) is required as a cofactor.

It localises to the cytoplasm. Its function is as follows. Single strand-specific metallo-endoribonuclease involved in late-stage 70S ribosome quality control and in maturation of the 3' terminus of the 16S rRNA. This chain is Endoribonuclease YbeY, found in Prochlorococcus marinus (strain NATL2A).